Here is a 452-residue protein sequence, read N- to C-terminus: MQVTETQADGLKRAFRVVVSAADLGAKADAKLAELKGQVKLNGFRPGKVPVAHLKRVYGKSVMSEVIEQTVNETNGKIVEEHGFKLALQPKVKLPEEDPQAQGLLEGGKDLAYDLEIEILPKIELGNFKDISVEKLVVEVSDAEVDETIQRIADANRPFVTREGGYAENGDRVTIDFTGYVDGEKFPGGEGQDIDVLLGSNGFIPGFEEQLLGVYAGDNRTLNVTFPEAYAAKELAGKAATFEVTVKSVAAPGPLTLDDEFAKTLGQESLEKLKEMVRARIASEHAGAARQKVKRALLDALDTTHQFAVPEGLVEQEFFGVWSRVQEDLAAQNRSFADEGTTEEEARADYRKIAERRVRLGLVLAEIGERNNIQVSEDEVTRAVVERARQFPGQEQQVWEYYRRTPEALASVRAPLFEEKVVDFLLELANVTEKTVTREELYKEEEDDEKAA.

Residues 170–255 enclose the PPIase FKBP-type domain; sequence GDRVTIDFTG…VKSVAAPGPL (86 aa).

It belongs to the FKBP-type PPIase family. Tig subfamily.

It is found in the cytoplasm. The enzyme catalyses [protein]-peptidylproline (omega=180) = [protein]-peptidylproline (omega=0). Functionally, involved in protein export. Acts as a chaperone by maintaining the newly synthesized protein in an open conformation. Functions as a peptidyl-prolyl cis-trans isomerase. In Xanthobacter autotrophicus (strain ATCC BAA-1158 / Py2), this protein is Trigger factor.